The chain runs to 122 residues: Small ribosomal subunit protein uS13 (122 aa).

Residues 93-122 form a disordered region; it reads RRGLPVRGQRTKTNARTRKGPKKTIAGKKK.

The protein belongs to the universal ribosomal protein uS13 family. As to quaternary structure, part of the 30S ribosomal subunit. Forms a loose heterodimer with protein S19. Forms two bridges to the 50S subunit in the 70S ribosome.

Functionally, located at the top of the head of the 30S subunit, it contacts several helices of the 16S rRNA. In the 70S ribosome it contacts the 23S rRNA (bridge B1a) and protein L5 of the 50S subunit (bridge B1b), connecting the 2 subunits; these bridges are implicated in subunit movement. Contacts the tRNAs in the A and P-sites. This is Small ribosomal subunit protein uS13 from Corynebacterium urealyticum (strain ATCC 43042 / DSM 7109).